The chain runs to 598 residues: Aspartate--tRNA(Asp/Asn) ligase (598 aa).

Residue Glu-173 coordinates L-aspartate. Residues 197–200 are aspartate; that stretch reads QLFK. Arg-219 serves as a coordination point for L-aspartate. ATP contacts are provided by residues 219–221 and Gln-228; that span reads RDE. His-448 is an L-aspartate binding site. Position 482 (Glu-482) interacts with ATP. Arg-489 serves as a coordination point for L-aspartate. 534–537 lines the ATP pocket; the sequence is GWDR. The disordered stretch occupies residues 560-598; the sequence is GYDPLTAAPAPITAQQRKEAGVDAKPETKKAAAGEPAGA. Residues 575 to 591 are compositionally biased toward basic and acidic residues; the sequence is QRKEAGVDAKPETKKAA.

This sequence belongs to the class-II aminoacyl-tRNA synthetase family. Type 1 subfamily. In terms of assembly, homodimer.

The protein localises to the cytoplasm. It catalyses the reaction tRNA(Asx) + L-aspartate + ATP = L-aspartyl-tRNA(Asx) + AMP + diphosphate. In terms of biological role, aspartyl-tRNA synthetase with relaxed tRNA specificity since it is able to aspartylate not only its cognate tRNA(Asp) but also tRNA(Asn). Reaction proceeds in two steps: L-aspartate is first activated by ATP to form Asp-AMP and then transferred to the acceptor end of tRNA(Asp/Asn). The polypeptide is Aspartate--tRNA(Asp/Asn) ligase (Kineococcus radiotolerans (strain ATCC BAA-149 / DSM 14245 / SRS30216)).